Here is a 330-residue protein sequence, read N- to C-terminus: 6-methylsalicylic acid decarboxylase acuB (330 aa).

Residues histidine 6, histidine 8, histidine 156, and aspartate 276 each contribute to the Zn(2+) site.

Belongs to the metallo-dependent hydrolases superfamily. ACMSD family. In terms of assembly, monomer.

Its subcellular location is the cytoplasm. The protein localises to the cytosol. It catalyses the reaction 6-methylsalicylate + H(+) = 3-methylphenol + CO2. Its pathway is secondary metabolite biosynthesis. In terms of biological role, 6-methylsalicylic acid decarboxylase; part of the gene cluster that mediates the biosynthesis of aculins. The pathway begins with the synthesis of 6-methylsalicylic acid by the polyketide synthase (PKS) acuA via condensation of acetate and malonate units. The 6-methylsalicylic acid decarboxylase acuB then catalyzes the decarboxylation of 6-methylsalicylic acid to yield m-cresol (also known as 3-methylphenol). These first reactions occur in the cytosol. The intermediate m-cresol is then transported into the endoplasmic reticulum where the cytochrome P450 monooxygenase acuC converts it to m-hydroxybenzyl alcohol, which is further converted to gentisyl alcohol by the cytochrome P450 monooxygenase acuD. Gentisyl alcohol is further oxidized by the oxidoreductase acuE that probably catalyzes hydroxylation of the aromatic ring. The aromatic system might then be opened by oxidation through a Baeyer-Villiger type of oxidation, which could be catalyzed by acuF, with the carboxylic acid at C-1 subsequently reduced to an aldehyde by acuG. Subsequently, a hemiacetal is formed, before the dehydrogenase acuH would reduce the double bond between C-4 and C-6. Finally, keto-enol tautomerism results in formation of aculinic acid, which exists as two diastereomers (both R/S configurations at C-1) by non-enzymatic hemiacetal formation. The carboxypeptidase acuI could be involved in the linking of aculinic acid to an aculene A moiety produced by the aculene biosynthesis cluster and which leads to the production of aculin A. AcuI may also be involved in the attachment of proline to aculinic acid to form epi-aculins A and B. This is 6-methylsalicylic acid decarboxylase acuB from Aspergillus aculeatus (strain ATCC 16872 / CBS 172.66 / WB 5094).